Consider the following 318-residue polypeptide: Bis(5'-nucleosyl)-tetraphosphatase, symmetrical (318 aa).

Positions 269–318 are disordered; the sequence is PGREVTGPAPVARAPRRPRERLGRQRSRGNRGNAGNTAVPAKPPVDTPQD. Basic residues predominate over residues 282–297; sequence APRRPRERLGRQRSRG. A compositionally biased stretch (pro residues) spans 309 to 318; that stretch reads AKPPVDTPQD.

Belongs to the Ap4A hydrolase family.

It carries out the reaction P(1),P(4)-bis(5'-adenosyl) tetraphosphate + H2O = 2 ADP + 2 H(+). Its function is as follows. Hydrolyzes diadenosine 5',5'''-P1,P4-tetraphosphate to yield ADP. The chain is Bis(5'-nucleosyl)-tetraphosphatase, symmetrical from Xanthomonas oryzae pv. oryzae (strain PXO99A).